The sequence spans 207 residues: Superoxide dismutase [Mn] (207 aa).

The Mn(2+) site is built by His28, His76, Asp160, and His164.

The protein belongs to the iron/manganese superoxide dismutase family. Mn(2+) is required as a cofactor.

The enzyme catalyses 2 superoxide + 2 H(+) = H2O2 + O2. Its function is as follows. Destroys superoxide anion radicals which are normally produced within the cells and which are toxic to biological systems. The chain is Superoxide dismutase [Mn] (sodA) from Mycobacterium intracellulare (strain ATCC 13950 / DSM 43223 / JCM 6384 / NCTC 13025 / 3600).